The chain runs to 168 residues: CASP-like protein 1U1 (168 aa).

Residues 1–6 are Cytoplasmic-facing; sequence MDGAAR. A helical transmembrane segment spans residues 7 to 27; the sequence is AVSLFFRIAVVGLSVAAAVVM. The Extracellular portion of the chain corresponds to 28-49; it reads ATASQAFPFNYGGAVSYTKYPA. The chain crosses the membrane as a helical span at residues 50–70; that stretch reads FVYFVVAAVVSAVCSAAALYL. The Cytoplasmic segment spans residues 71-80; it reads SVVREAAAGW. Residues 81–101 traverse the membrane as a helical segment; the sequence is AVALLDVVTMGLLFSAAGAVF. Residues 102–138 are Extracellular-facing; sequence AVRRMAPLYLGVAGADTVAGRWVNGEFCHAAGAFCWR. A helical transmembrane segment spans residues 139 to 159; that stretch reads VTTSAIICAFAAAAVSVAVLT. The Cytoplasmic segment spans residues 160-168; the sequence is KGARHRGKH.

The protein belongs to the Casparian strip membrane proteins (CASP) family. As to quaternary structure, homodimer and heterodimers.

Its subcellular location is the cell membrane. This Oryza sativa subsp. japonica (Rice) protein is CASP-like protein 1U1.